A 92-amino-acid chain; its full sequence is MLCSIYKSSKKENTYLYINNKDDFSDVPDSLMGTFGAPQFVMVLKLEGRKLALADVEKVKESLATVGYYLQVPPPVTNLLHQYKAAKASQTS.

In terms of domain architecture, YcgL spans M1–K84.

The sequence is that of YcgL domain-containing protein PBPRA1080 from Photobacterium profundum (strain SS9).